Here is a 115-residue protein sequence, read N- to C-terminus: Probable non-functional T cell receptor beta variable 7-1 (115 aa).

A signal peptide spans 1-21; the sequence is MGTRLLCWAAICLLGADHTGA. The region spanning 22 to 115 is the Ig-like domain; it reads GVSQSLRHKV…LAVYLCASSS (94 aa).

Most probably, the alpha-beta TR is not assembled due to incorrect folding of the beta chain. Alpha-beta TR is a heterodimer composed of an alpha and beta chain; disulfide-linked. The alpha-beta TR is associated with the transmembrane signaling CD3 coreceptor proteins to form the TR-CD3 (TcR or TCR). The assembly of alpha-beta TR heterodimers with CD3 occurs in the endoplasmic reticulum where a single alpha-beta TR heterodimer associates with one CD3D-CD3E heterodimer, one CD3G-CD3E heterodimer and one CD247 homodimer forming a stable octameric structure. CD3D-CD3E and CD3G-CD3E heterodimers preferentially associate with TR alpha and TR beta chains, respectively. The association of the CD247 homodimer is the last step of TcR assembly in the endoplasmic reticulum and is required for transport to the cell surface.

Its subcellular location is the cell membrane. Functionally, probable non-functional open reading frame (ORF) of V region of the variable domain of T cell receptor (TR) beta chain. Non-functional ORF generally cannot participate in the synthesis of a productive T cell receptor (TR) chain due to altered V-(D)-J or switch recombination and/or splicing site (at mRNA level) and/or conserved amino acid change (protein level). Alpha-beta T cell receptors are antigen specific receptors which are essential to the immune response and are present on the cell surface of T lymphocytes. Recognize peptide-major histocompatibility (MH) (pMH) complexes that are displayed by antigen presenting cells (APC), a prerequisite for efficient T cell adaptive immunity against pathogens. Binding of alpha-beta TR to pMH complex initiates TR-CD3 clustering on the cell surface and intracellular activation of LCK that phosphorylates the ITAM motifs of CD3G, CD3D, CD3E and CD247 enabling the recruitment of ZAP70. In turn ZAP70 phosphorylates LAT, which recruits numerous signaling molecules to form the LAT signalosome. The LAT signalosome propagates signal branching to three major signaling pathways, the calcium, the mitogen-activated protein kinase (MAPK) kinase and the nuclear factor NF-kappa-B (NF-kB) pathways, leading to the mobilization of transcription factors that are critical for gene expression and essential for T cell growth and differentiation. The T cell repertoire is generated in the thymus, by V-(D)-J rearrangement. This repertoire is then shaped by intrathymic selection events to generate a peripheral T cell pool of self-MH restricted, non-autoaggressive T cells. Post-thymic interaction of alpha-beta TR with the pMH complexes shapes TR structural and functional avidity. This Homo sapiens (Human) protein is Probable non-functional T cell receptor beta variable 7-1.